Reading from the N-terminus, the 277-residue chain is Small ribosomal subunit protein uS3 (277 aa).

One can recognise a KH type-2 domain in the interval I38–K106. Positions A217 to S277 are disordered. Residues A225–A235 show a composition bias toward basic and acidic residues. The segment covering S242–T261 has biased composition (low complexity).

This sequence belongs to the universal ribosomal protein uS3 family. In terms of assembly, part of the 30S ribosomal subunit. Forms a tight complex with proteins S10 and S14.

Its function is as follows. Binds the lower part of the 30S subunit head. Binds mRNA in the 70S ribosome, positioning it for translation. In Mycobacteroides abscessus (strain ATCC 19977 / DSM 44196 / CCUG 20993 / CIP 104536 / JCM 13569 / NCTC 13031 / TMC 1543 / L948) (Mycobacterium abscessus), this protein is Small ribosomal subunit protein uS3.